A 451-amino-acid polypeptide reads, in one-letter code: Phosphoglucosamine mutase (451 aa).

Catalysis depends on S107, which acts as the Phosphoserine intermediate. Residues S107, D246, D248, and D250 each coordinate Mg(2+). S107 is modified (phosphoserine).

The protein belongs to the phosphohexose mutase family. Mg(2+) is required as a cofactor. In terms of processing, activated by phosphorylation.

It catalyses the reaction alpha-D-glucosamine 1-phosphate = D-glucosamine 6-phosphate. Catalyzes the conversion of glucosamine-6-phosphate to glucosamine-1-phosphate. In Burkholderia ambifaria (strain MC40-6), this protein is Phosphoglucosamine mutase.